A 67-amino-acid polypeptide reads, in one-letter code: ATP synthase F(0) complex subunit 8 (67 aa).

The helical transmembrane segment at 8–24 (TWFITITSMIMTLFILF) threads the bilayer. Lysine 54 bears the N6-acetyllysine; alternate mark. N6-succinyllysine; alternate is present on lysine 54. Lysine 57 is modified (N6-acetyllysine).

The protein belongs to the ATPase protein 8 family. Component of the ATP synthase complex composed at least of ATP5F1A/subunit alpha, ATP5F1B/subunit beta, ATP5MC1/subunit c (homooctomer), MT-ATP6/subunit a, MT-ATP8/subunit 8, ATP5ME/subunit e, ATP5MF/subunit f, ATP5MG/subunit g, ATP5MK/subunit k, ATP5MJ/subunit j, ATP5F1C/subunit gamma, ATP5F1D/subunit delta, ATP5F1E/subunit epsilon, ATP5PF/subunit F6, ATP5PB/subunit b, ATP5PD/subunit d, ATP5PO/subunit OSCP. ATP synthase complex consists of a soluble F(1) head domain (subunits alpha(3) and beta(3)) - the catalytic core - and a membrane F(0) domain - the membrane proton channel (subunits c, a, 8, e, f, g, k and j). These two domains are linked by a central stalk (subunits gamma, delta, and epsilon) rotating inside the F1 region and a stationary peripheral stalk (subunits F6, b, d, and OSCP). Interacts with PRICKLE3.

It is found in the mitochondrion membrane. In terms of biological role, subunit 8, of the mitochondrial membrane ATP synthase complex (F(1)F(0) ATP synthase or Complex V) that produces ATP from ADP in the presence of a proton gradient across the membrane which is generated by electron transport complexes of the respiratory chain. ATP synthase complex consist of a soluble F(1) head domain - the catalytic core - and a membrane F(1) domain - the membrane proton channel. These two domains are linked by a central stalk rotating inside the F(1) region and a stationary peripheral stalk. During catalysis, ATP synthesis in the catalytic domain of F(1) is coupled via a rotary mechanism of the central stalk subunits to proton translocation. In vivo, can only synthesize ATP although its ATP hydrolase activity can be activated artificially in vitro. Part of the complex F(0) domain. This Sus scrofa (Pig) protein is ATP synthase F(0) complex subunit 8.